Reading from the N-terminus, the 218-residue chain is Pyridoxine/pyridoxamine 5'-phosphate oxidase (218 aa).

Residues 14-17 (RREY) and K72 each bind substrate. FMN contacts are provided by residues 67–72 (RIVLLK), 82–83 (YT), R88, K89, and Q111. 3 residues coordinate substrate: Y129, R133, and S137. Residues 146-147 (QS) and W191 contribute to the FMN site. 197-199 (RLH) lines the substrate pocket. R201 is an FMN binding site.

The protein belongs to the pyridoxamine 5'-phosphate oxidase family. Homodimer. It depends on FMN as a cofactor.

It carries out the reaction pyridoxamine 5'-phosphate + O2 + H2O = pyridoxal 5'-phosphate + H2O2 + NH4(+). The enzyme catalyses pyridoxine 5'-phosphate + O2 = pyridoxal 5'-phosphate + H2O2. The protein operates within cofactor metabolism; pyridoxal 5'-phosphate salvage; pyridoxal 5'-phosphate from pyridoxamine 5'-phosphate: step 1/1. Its pathway is cofactor metabolism; pyridoxal 5'-phosphate salvage; pyridoxal 5'-phosphate from pyridoxine 5'-phosphate: step 1/1. In terms of biological role, catalyzes the oxidation of either pyridoxine 5'-phosphate (PNP) or pyridoxamine 5'-phosphate (PMP) into pyridoxal 5'-phosphate (PLP). The protein is Pyridoxine/pyridoxamine 5'-phosphate oxidase of Klebsiella pneumoniae subsp. pneumoniae (strain ATCC 700721 / MGH 78578).